The chain runs to 124 residues: CLAVATA3/ESR (CLE)-related protein 45 (124 aa).

The signal sequence occupies residues 1 to 20 (MLGSSTRSMFFLLVCIGLLA). N-linked (GlcNAc...) asparagine glycans are attached at residues Asn25 and Asn96. Positions 71–109 (LNKNRRVLEEVNKDKIKAEETQERKNKTEDSFKSSKRRV) form a coiled coil. Residues 87 to 103 (KAEETQERKNKTEDSFK) are compositionally biased toward basic and acidic residues. The segment at 87–124 (KAEETQERKNKTEDSFKSSKRRVRRGSDPIHNKAQPFS) is disordered.

The protein belongs to the CLV3/ESR signal peptide family. Binds to SKM1 present in the pollen grain, particularly under relatively high temperature (at 30 degrees Celsius). Interacts with BAM3, especially in roots. Expressed at low levels in flowers, especially in pistils. Present in vascular tissues. In roots, confined to protophloem and sieve element precursor cells.

The protein localises to the secreted. It localises to the extracellular space. Extracellular signal peptide that regulates cell fate. Represses root apical meristem maintenance. Represses protophloem differentiation in a BAM3-dependent manner. BRX, BAM3, and CLE45 act together to regulate the transition of protophloem cells from proliferation to differentiation, thus impinging on postembryonic growth capacity of the root meristem; this signaling pathway requires CRN and CLV2 and involves MAKR5 for its transduction/amplification. Triggers the accumulation of MAKR5 in developing sieve elements in a BAM3-dependent manner. Prevents, in a dose-dependent manner, auxin response in the root meristem thus leading in the repression of protophloem differentiation and periclinal sieve element precursor cell division. Promotes pollen tube growth prolongation in a SKM1 and SKM2-dependent manner, especially under relatively high temperature (at 30 degrees Celsius), thus conferring tolerance against high temperature probably through the maintenance of mitochondrial activity. Alleviates mitochondrial decay pollen tube in vitro culture. The chain is CLAVATA3/ESR (CLE)-related protein 45 from Arabidopsis thaliana (Mouse-ear cress).